Reading from the N-terminus, the 370-residue chain is Heme A synthase (370 aa).

8 consecutive transmembrane segments (helical) span residues 15–35 (VRIWLTLVAALIAVMVLVGGA), 104–124 (VIGIVYLLPFLWFLWRGAIGP), 129–149 (ALWIIFALGALQGAVGWWMVA), 161–181 (VRLATHLSLALIIYAAIVWTL), 200–220 (ALALLGLTFVQLYAGALVAGL), 261–280 (QFDHRMLAYALWTLAALHMI), 293–313 (GAVLLFLALTVQAALGIFTVL), and 317–337 (PIDLALAHQAMALVVLTLAVL). H264 provides a ligand contact to heme. Heme is bound at residue H324.

This sequence belongs to the COX15/CtaA family. Type 2 subfamily. In terms of assembly, interacts with CtaB. Heme b serves as cofactor.

The protein resides in the cell membrane. It catalyses the reaction Fe(II)-heme o + 2 A + H2O = Fe(II)-heme a + 2 AH2. Its pathway is porphyrin-containing compound metabolism; heme A biosynthesis; heme A from heme O: step 1/1. Functionally, catalyzes the conversion of heme O to heme A by two successive hydroxylations of the methyl group at C8. The first hydroxylation forms heme I, the second hydroxylation results in an unstable dihydroxymethyl group, which spontaneously dehydrates, resulting in the formyl group of heme A. The protein is Heme A synthase of Rhodopseudomonas palustris (strain TIE-1).